Reading from the N-terminus, the 436-residue chain is Phosphomethylpyrimidine synthase (436 aa).

Residues asparagine 69, methionine 98, tyrosine 127, histidine 163, 185 to 187, 226 to 229, and glutamate 265 contribute to the substrate site; these read SRG and DACR. Position 269 (histidine 269) interacts with Zn(2+). Tyrosine 292 provides a ligand contact to substrate. Histidine 333 is a binding site for Zn(2+). The [4Fe-4S] cluster site is built by cysteine 409, cysteine 412, and cysteine 416.

The protein belongs to the ThiC family. The cofactor is [4Fe-4S] cluster.

It carries out the reaction 5-amino-1-(5-phospho-beta-D-ribosyl)imidazole + S-adenosyl-L-methionine = 4-amino-2-methyl-5-(phosphooxymethyl)pyrimidine + CO + 5'-deoxyadenosine + formate + L-methionine + 3 H(+). Its pathway is cofactor biosynthesis; thiamine diphosphate biosynthesis. Its function is as follows. Catalyzes the synthesis of the hydroxymethylpyrimidine phosphate (HMP-P) moiety of thiamine from aminoimidazole ribotide (AIR) in a radical S-adenosyl-L-methionine (SAM)-dependent reaction. The chain is Phosphomethylpyrimidine synthase from Clostridium perfringens (strain SM101 / Type A).